Here is a 160-residue protein sequence, read N- to C-terminus: Phosphatidylinositol N-acetylglucosaminyltransferase subunit gpi15 (160 aa).

Transmembrane regions (helical) follow at residues 22–42 (GTQM…SLAI) and 48–68 (IIIT…ISGV).

It belongs to the PIGH family.

Its subcellular location is the endoplasmic reticulum membrane. The enzyme catalyses a 1,2-diacyl-sn-glycero-3-phospho-(1D-myo-inositol) + UDP-N-acetyl-alpha-D-glucosamine = a 6-(N-acetyl-alpha-D-glucosaminyl)-1-(1,2-diacyl-sn-glycero-3-phospho)-1D-myo-inositol + UDP + H(+). Its pathway is glycolipid biosynthesis; glycosylphosphatidylinositol-anchor biosynthesis. Functionally, part of the complex catalyzing the transfer of N-acetylglucosamine from UDP-N-acetylglucosamine to phosphatidylinositol, the first step of GPI biosynthesis. The sequence is that of Phosphatidylinositol N-acetylglucosaminyltransferase subunit gpi15 (gpi15) from Schizosaccharomyces pombe (strain 972 / ATCC 24843) (Fission yeast).